The sequence spans 799 residues: Histidine biosynthesis trifunctional protein (799 aa).

Residues 1 to 229 (MVLPILPLID…FIVEQENVGF (229 aa)) are phosphoribosyl-AMP cyclohydrolase. The tract at residues 230 to 312 (CHLETMSCFG…FYFALAKLVT (83 aa)) is phosphoribosyl-ATP pyrophosphohydrolase. The histidinol dehydrogenase stretch occupies residues 313-799 (NNVSLKDVEN…KLGLIPKDFQ (487 aa)). Zn(2+) contacts are provided by Q618 and H621. Catalysis depends on residues E687 and H688. Residues D721 and H780 each contribute to the Zn(2+) site.

In the C-terminal section; belongs to the histidinol dehydrogenase family. It depends on Zn(2+) as a cofactor.

The enzyme catalyses 1-(5-phospho-beta-D-ribosyl)-5'-AMP + H2O = 1-(5-phospho-beta-D-ribosyl)-5-[(5-phospho-beta-D-ribosylamino)methylideneamino]imidazole-4-carboxamide. It carries out the reaction 1-(5-phospho-beta-D-ribosyl)-ATP + H2O = 1-(5-phospho-beta-D-ribosyl)-5'-AMP + diphosphate + H(+). The catalysed reaction is L-histidinol + 2 NAD(+) + H2O = L-histidine + 2 NADH + 3 H(+). It participates in amino-acid biosynthesis; L-histidine biosynthesis; L-histidine from 5-phospho-alpha-D-ribose 1-diphosphate: step 2/9. Its pathway is amino-acid biosynthesis; L-histidine biosynthesis; L-histidine from 5-phospho-alpha-D-ribose 1-diphosphate: step 3/9. The protein operates within amino-acid biosynthesis; L-histidine biosynthesis; L-histidine from 5-phospho-alpha-D-ribose 1-diphosphate: step 9/9. This is Histidine biosynthesis trifunctional protein (HIS4) from Saccharomyces bayanus (Yeast).